The chain runs to 117 residues: Putative pterin-4-alpha-carbinolamine dehydratase (117 aa).

It belongs to the pterin-4-alpha-carbinolamine dehydratase family.

The enzyme catalyses (4aS,6R)-4a-hydroxy-L-erythro-5,6,7,8-tetrahydrobiopterin = (6R)-L-erythro-6,7-dihydrobiopterin + H2O. This is Putative pterin-4-alpha-carbinolamine dehydratase from Colwellia psychrerythraea (strain 34H / ATCC BAA-681) (Vibrio psychroerythus).